The sequence spans 112 residues: Protein FAM32A (112 aa).

The segment at 15 to 35 (KGCGDMSLGKKKKKKNKANDQ) is disordered.

Belongs to the FAM32 family.

The protein resides in the nucleus. Its function is as follows. May induce G2 arrest and apoptosis. May also increase cell sensitivity to apoptotic stimuli. This is Protein FAM32A (fam32a) from Xenopus tropicalis (Western clawed frog).